Here is a 66-residue protein sequence, read N- to C-terminus: uncharacterized protein (66 aa).

This is an uncharacterized protein from Bacillus subtilis (strain 168).